The sequence spans 171 residues: Co-chaperone protein HscB (171 aa).

In terms of domain architecture, J spans 2–74 (DYFTLFGLPA…LTRAEYLLSL (73 aa)).

This sequence belongs to the HscB family. As to quaternary structure, interacts with HscA and stimulates its ATPase activity. Interacts with IscU.

In terms of biological role, co-chaperone involved in the maturation of iron-sulfur cluster-containing proteins. Seems to help targeting proteins to be folded toward HscA. In Salmonella arizonae (strain ATCC BAA-731 / CDC346-86 / RSK2980), this protein is Co-chaperone protein HscB.